The sequence spans 362 residues: Probable secreted beta-glucosidase UTH1 (362 aa).

Residues 1 to 17 (MKLSALLALSASTAVLA) form the signal peptide.

This sequence belongs to the SUN family.

It localises to the mitochondrion outer membrane. Its subcellular location is the secreted. The protein localises to the cell wall. Functionally, involved in aging, oxidative stress response, and in the regulation of mitochondrial biogenesis. Inactivation of UTH1 increases life span, leads to higher resistance to heat stress and to hydrogen peroxide, and increases sensitivity to the superoxide radical-generating drug paraquat and to copper. Also required for the selective autophagic degradation of mitochondria (mitophagy) in response to nitrogen starvation. May play a role in cell wall morphogenesis and septation. Involved in the remodeling of the cell wall during the various phases of yeast culture development and under various environmental conditions and plays a role in septation. Involved in cell sensitivity to boric acid. This Saccharomyces cerevisiae (strain YJM789) (Baker's yeast) protein is Probable secreted beta-glucosidase UTH1 (UTH1).